Reading from the N-terminus, the 481-residue chain is Hyaluronidase-4 (481 aa).

Over 1–11 (MQLLPEGQLRL) the chain is Cytoplasmic. The helical transmembrane segment at 12 to 32 (CVFQPVHLTSGLLILFILKSI) threads the bilayer. Over 33–455 (SSLKPARLPV…CREMTEASGP (423 aa)) the chain is Extracellular. Cystine bridges form between Cys-59-Cys-351, Cys-223-Cys-237, Cys-376-Cys-387, Cys-381-Cys-435, and Cys-437-Cys-446. N-linked (GlcNAc...) asparagine glycosylation is found at Asn-64 and Asn-115. Glu-147 (proton donor) is an active-site residue. N-linked (GlcNAc...) asparagine glycosylation is found at Asn-232 and Asn-343. A helical transmembrane segment spans residues 456-476 (SGLSLSSSSVITLCLLVLAGY). The Cytoplasmic portion of the chain corresponds to 477–481 (QSIQL).

The protein belongs to the glycosyl hydrolase 56 family.

The protein localises to the membrane. The enzyme catalyses Random hydrolysis of (1-&gt;4)-linkages between N-acetyl-beta-D-glucosamine and D-glucuronate residues in hyaluronate.. Its function is as follows. Endo-hyaluronidase that degrades hyaluronan to smaller oligosaccharide fragments. Also has chondroitin sulfate hydrolase activity, The best substrate being the galactosaminidic linkage in the sequence of a trisulfated tetrasaccharide. This chain is Hyaluronidase-4 (Hyal4), found in Mus musculus (Mouse).